The chain runs to 501 residues: ATP synthase subunit alpha, chloroplastic (501 aa).

Glycine 170–threonine 177 contacts ATP.

The protein belongs to the ATPase alpha/beta chains family. As to quaternary structure, F-type ATPases have 2 components, CF(1) - the catalytic core - and CF(0) - the membrane proton channel. CF(1) has five subunits: alpha(3), beta(3), gamma(1), delta(1), epsilon(1). CF(0) has four main subunits: a, b, b' and c.

Its subcellular location is the plastid. It is found in the chloroplast thylakoid membrane. It carries out the reaction ATP + H2O + 4 H(+)(in) = ADP + phosphate + 5 H(+)(out). In terms of biological role, produces ATP from ADP in the presence of a proton gradient across the membrane. The alpha chain is a regulatory subunit. In Pisum sativum (Garden pea), this protein is ATP synthase subunit alpha, chloroplastic.